The sequence spans 248 residues: Triosephosphate isomerase (248 aa).

Residue 9-11 coordinates substrate; sequence NWK. The active-site Electrophile is the His-94. The active-site Proton acceptor is the Glu-166. Residues Gly-172, Ser-211, and 232 to 233 contribute to the substrate site; that span reads GG.

It belongs to the triosephosphate isomerase family. Homodimer.

Its subcellular location is the cytoplasm. The catalysed reaction is D-glyceraldehyde 3-phosphate = dihydroxyacetone phosphate. It participates in carbohydrate biosynthesis; gluconeogenesis. The protein operates within carbohydrate degradation; glycolysis; D-glyceraldehyde 3-phosphate from glycerone phosphate: step 1/1. Involved in the gluconeogenesis. Catalyzes stereospecifically the conversion of dihydroxyacetone phosphate (DHAP) to D-glyceraldehyde-3-phosphate (G3P). The polypeptide is Triosephosphate isomerase (Vesicomyosocius okutanii subsp. Calyptogena okutanii (strain HA)).